Reading from the N-terminus, the 343-residue chain is Holliday junction branch migration complex subunit RuvB (343 aa).

The segment at 1–185 (MEQEDFNIRE…FGINLHLEYY (185 aa)) is large ATPase domain (RuvB-L). ATP is bound by residues Leu-24, Arg-25, Gly-66, Lys-69, Thr-70, Thr-71, 132 to 134 (EDY), Arg-175, Tyr-185, and Arg-222. Thr-70 is a Mg(2+) binding site. The interval 186-256 (DDDILSNIIR…IAQFALEALN (71 aa)) is small ATPAse domain (RuvB-S). The interval 259 to 343 (KYGLDEIDNK…YSSQKTLFND (85 aa)) is head domain (RuvB-H). The DNA site is built by Arg-314 and Arg-319.

Belongs to the RuvB family. As to quaternary structure, homohexamer. Forms an RuvA(8)-RuvB(12)-Holliday junction (HJ) complex. HJ DNA is sandwiched between 2 RuvA tetramers; dsDNA enters through RuvA and exits via RuvB. An RuvB hexamer assembles on each DNA strand where it exits the tetramer. Each RuvB hexamer is contacted by two RuvA subunits (via domain III) on 2 adjacent RuvB subunits; this complex drives branch migration. In the full resolvosome a probable DNA-RuvA(4)-RuvB(12)-RuvC(2) complex forms which resolves the HJ.

The protein localises to the cytoplasm. It catalyses the reaction ATP + H2O = ADP + phosphate + H(+). In terms of biological role, the RuvA-RuvB-RuvC complex processes Holliday junction (HJ) DNA during genetic recombination and DNA repair, while the RuvA-RuvB complex plays an important role in the rescue of blocked DNA replication forks via replication fork reversal (RFR). RuvA specifically binds to HJ cruciform DNA, conferring on it an open structure. The RuvB hexamer acts as an ATP-dependent pump, pulling dsDNA into and through the RuvAB complex. RuvB forms 2 homohexamers on either side of HJ DNA bound by 1 or 2 RuvA tetramers; 4 subunits per hexamer contact DNA at a time. Coordinated motions by a converter formed by DNA-disengaged RuvB subunits stimulates ATP hydrolysis and nucleotide exchange. Immobilization of the converter enables RuvB to convert the ATP-contained energy into a lever motion, pulling 2 nucleotides of DNA out of the RuvA tetramer per ATP hydrolyzed, thus driving DNA branch migration. The RuvB motors rotate together with the DNA substrate, which together with the progressing nucleotide cycle form the mechanistic basis for DNA recombination by continuous HJ branch migration. Branch migration allows RuvC to scan DNA until it finds its consensus sequence, where it cleaves and resolves cruciform DNA. In Bacteroides thetaiotaomicron (strain ATCC 29148 / DSM 2079 / JCM 5827 / CCUG 10774 / NCTC 10582 / VPI-5482 / E50), this protein is Holliday junction branch migration complex subunit RuvB.